Reading from the N-terminus, the 387-residue chain is Flap endonuclease 1 (387 aa).

The N-domain stretch occupies residues 1 to 104; it reads MGILGLSKLI…GELAKRAERR (104 aa). Asp34 provides a ligand contact to Mg(2+). DNA is bound by residues Arg47 and Arg70. Residues Asp86, Glu158, Glu160, Asp179, and Asp181 each coordinate Mg(2+). Positions 122–253 are I-domain; it reads GIEKFNRRLV…KRAIELINNY (132 aa). A DNA-binding site is contributed by Glu158. Residues Gly231 and Asp233 each contribute to the DNA site. A Mg(2+)-binding site is contributed by Asp233. Residues 336–344 are interaction with PCNA; sequence TQVRLDSFF. A disordered region spans residues 346–387; it reads TLPSTPNATNAAKRKAEEAKKSANNKKAKTSGGVGGRGRRPK.

Belongs to the XPG/RAD2 endonuclease family. FEN1 subfamily. Interacts with PCNA. Three molecules of FEN1 bind to one PCNA trimer with each molecule binding to one PCNA monomer. PCNA stimulates the nuclease activity without altering cleavage specificity. The cofactor is Mg(2+). Post-translationally, phosphorylated. Phosphorylation upon DNA damage induces relocalization to the nuclear plasma.

It is found in the nucleus. The protein resides in the nucleolus. The protein localises to the nucleoplasm. Its subcellular location is the mitochondrion. Functionally, structure-specific nuclease with 5'-flap endonuclease and 5'-3' exonuclease activities involved in DNA replication and repair. During DNA replication, cleaves the 5'-overhanging flap structure that is generated by displacement synthesis when DNA polymerase encounters the 5'-end of a downstream Okazaki fragment. It enters the flap from the 5'-end and then tracks to cleave the flap base, leaving a nick for ligation. Also involved in the long patch base excision repair (LP-BER) pathway, by cleaving within the apurinic/apyrimidinic (AP) site-terminated flap. Acts as a genome stabilization factor that prevents flaps from equilibrating into structures that lead to duplications and deletions. Also possesses 5'-3' exonuclease activity on nicked or gapped double-stranded DNA, and exhibits RNase H activity. Also involved in replication and repair of rDNA and in repairing mitochondrial DNA. In Drosophila erecta (Fruit fly), this protein is Flap endonuclease 1.